Here is a 271-residue protein sequence, read N- to C-terminus: 4-diphosphocytidyl-2-C-methyl-D-erythritol kinase (271 aa).

Residue Lys17 is part of the active site. 97–107 (PVGSGLGGGSS) is an ATP binding site. Asp137 is a catalytic residue.

The protein belongs to the GHMP kinase family. IspE subfamily.

The enzyme catalyses 4-CDP-2-C-methyl-D-erythritol + ATP = 4-CDP-2-C-methyl-D-erythritol 2-phosphate + ADP + H(+). It functions in the pathway isoprenoid biosynthesis; isopentenyl diphosphate biosynthesis via DXP pathway; isopentenyl diphosphate from 1-deoxy-D-xylulose 5-phosphate: step 3/6. In terms of biological role, catalyzes the phosphorylation of the position 2 hydroxy group of 4-diphosphocytidyl-2C-methyl-D-erythritol. This Thermotoga maritima (strain ATCC 43589 / DSM 3109 / JCM 10099 / NBRC 100826 / MSB8) protein is 4-diphosphocytidyl-2-C-methyl-D-erythritol kinase.